A 503-amino-acid polypeptide reads, in one-letter code: Potassium voltage-gated channel subfamily V member 1 (503 aa).

At 1–213 the chain is on the cytoplasmic side; the sequence is MELLPPRGRA…EKPGSCTAAR (213 aa). The chain crosses the membrane as a helical span at residues 214–234; it reads IFGVISIIFVAVSIVNMALMS. The Extracellular segment spans residues 235-246; that stretch reads AELSWLDPQLLE. The chain crosses the membrane as a helical span at residues 247-267; the sequence is ILEYVCISWFTGEFVLRFLCV. The Cytoplasmic portion of the chain corresponds to 268 to 279; that stretch reads RDRCRFLRKVPN. The chain crosses the membrane as a helical span at residues 280-300; it reads IIDLLAILPFYITLLVESLSG. Over 301-312 the chain is Extracellular; sequence SQTTQELENVGR. Residues 313–334 form a helical; Voltage-sensor membrane-spanning segment; the sequence is IVQVLRLLRALRMLKLGRHSTG. Residues 335 to 348 lie on the Cytoplasmic side of the membrane; that stretch reads LRSLGMTITQCYEE. A helical membrane pass occupies residues 349 to 369; it reads VGLLLLFLSVGISIFSTVEYF. The short motif at 395-400 is the Selectivity filter element; the sequence is TVGYGD. A helical membrane pass occupies residues 410-430; sequence IVAFMCILSGILVLALPIAII. Over 431–503 the chain is Cytoplasmic; it reads NDRFSACYFT…RSSGGDDFWF (73 aa).

Belongs to the potassium channel family. V (TC 1.A.1.2) subfamily. Kv8.1/KCNV1 sub-subfamily. Heteromultimer with KCNB1 and KCNB2. Interacts with KCNC4 and KCND1.

The protein resides in the cell membrane. Its function is as follows. Potassium channel subunit that does not form functional channels by itself. Modulates KCNB1 and KCNB2 channel activity by shifting the threshold for inactivation to more negative values and by slowing the rate of inactivation. Can down-regulate the channel activity of KCNB1, KCNB2, KCNC4 and KCND1, possibly by trapping them in intracellular membranes. This Bos taurus (Bovine) protein is Potassium voltage-gated channel subfamily V member 1 (KCNV1).